Consider the following 681-residue polypeptide: Proline-rich receptor-like protein kinase PERK8 (681 aa).

Residues 1-11 (MSLVPPLPILS) are compositionally biased toward pro residues. The segment at 1–231 (MSLVPPLPIL…TLPSSSPGKS (231 aa)) is disordered. The Extracellular portion of the chain corresponds to 1–237 (MSLVPPLPIL…PGKSEVGTGG (237 aa)). N-linked (GlcNAc...) asparagine glycosylation is present at N16. Positions 21-163 (APPPLQTQPT…SPPKPSPSTP (143 aa)) are enriched in pro residues. A compositionally biased stretch (low complexity) spans 177-191 (TSASPPSSNPTDPST). Positions 192-201 (LAPPPTPLPV) are enriched in pro residues. Residues 214–229 (PASNNGNNTLPSSSPG) are compositionally biased toward polar residues. N-linked (GlcNAc...) asparagine glycosylation occurs at N220. Residues 238-258 (IVAIGVIVGLVFLSLFVMGVW) form a helical membrane-spanning segment. Residues 259–681 (FTRKRKRKDP…GSRDQSRFVP (423 aa)) are Cytoplasmic-facing. A Protein kinase domain is found at 339 to 617 (FSEKNLLGEG…SQVVRALDTL (279 aa)). ATP is bound by residues 345–353 (LGEGGFGCV) and K367. Y412 is subject to Phosphotyrosine. D463 acts as the Proton acceptor in catalysis. Phosphoserine occurs at positions 467 and 498. 2 positions are modified to phosphothreonine: T499 and T504. Phosphotyrosine is present on Y512.

It belongs to the protein kinase superfamily. Ser/Thr protein kinase family. As to quaternary structure, interacts with KIPK1 and KIPK2 (via its cytosolic domain). Mostly expressed in seedlings, roots, inflorescence bolts and flower buds.

Its subcellular location is the cell membrane. It catalyses the reaction L-seryl-[protein] + ATP = O-phospho-L-seryl-[protein] + ADP + H(+). The enzyme catalyses L-threonyl-[protein] + ATP = O-phospho-L-threonyl-[protein] + ADP + H(+). Could be involved in the negative regulation of root growth. The protein is Proline-rich receptor-like protein kinase PERK8 (PERK8) of Arabidopsis thaliana (Mouse-ear cress).